A 431-amino-acid polypeptide reads, in one-letter code: Histidinol dehydrogenase (431 aa).

NAD(+) contacts are provided by Y131, Q193, and N216. Positions 239, 261, and 264 each coordinate substrate. 2 residues coordinate Zn(2+): Q261 and H264. Residues E329 and H330 each act as proton acceptor in the active site. Positions 330, 363, 417, and 422 each coordinate substrate. Zn(2+) is bound at residue D363. H422 lines the Zn(2+) pocket.

It belongs to the histidinol dehydrogenase family. Zn(2+) serves as cofactor.

It carries out the reaction L-histidinol + 2 NAD(+) + H2O = L-histidine + 2 NADH + 3 H(+). It participates in amino-acid biosynthesis; L-histidine biosynthesis; L-histidine from 5-phospho-alpha-D-ribose 1-diphosphate: step 9/9. Functionally, catalyzes the sequential NAD-dependent oxidations of L-histidinol to L-histidinaldehyde and then to L-histidine. This Clostridium acetobutylicum (strain ATCC 824 / DSM 792 / JCM 1419 / IAM 19013 / LMG 5710 / NBRC 13948 / NRRL B-527 / VKM B-1787 / 2291 / W) protein is Histidinol dehydrogenase.